A 344-amino-acid polypeptide reads, in one-letter code: S-methyl-5'-thioadenosine phosphorylase (344 aa).

Residues Thr45, 88–89, and 121–122 contribute to the phosphate site; these read RH and SA. Met238 contributes to the substrate binding site. Residue Ser239 coordinates phosphate. 262-264 is a binding site for substrate; it reads DYD.

Belongs to the PNP/MTAP phosphorylase family. MTAP subfamily. As to quaternary structure, homotrimer.

The protein resides in the cytoplasm. It localises to the nucleus. It catalyses the reaction S-methyl-5'-thioadenosine + phosphate = 5-(methylsulfanyl)-alpha-D-ribose 1-phosphate + adenine. The protein operates within amino-acid biosynthesis; L-methionine biosynthesis via salvage pathway; S-methyl-5-thio-alpha-D-ribose 1-phosphate from S-methyl-5'-thioadenosine (phosphorylase route): step 1/1. Its function is as follows. Catalyzes the reversible phosphorylation of S-methyl-5'-thioadenosine (MTA) to adenine and 5-methylthioribose-1-phosphate. Involved in the breakdown of MTA, a major by-product of polyamine biosynthesis. Responsible for the first step in the methionine salvage pathway after MTA has been generated from S-adenosylmethionine. Has broad substrate specificity with 6-aminopurine nucleosides as preferred substrates. This chain is S-methyl-5'-thioadenosine phosphorylase, found in Candida albicans (strain SC5314 / ATCC MYA-2876) (Yeast).